Consider the following 363-residue polypeptide: MYIKNLYLDNFRNYDNIEIDFNKKVNILTGNNAQGKTNILESIFYCSLGKSHRTNKDKELIKWDKDEAFIRLNLSRKPLDKKIEIKIFKGGKKGININSIKLKKISELFGIFNVVMFSPEDLKIVKESPGHRRKFLDMEISKLDHRYYYKLVQYNKILDQRNIMLRNKKFLNNDMISVYDEQLSKFGSSLIESRIKYLNKLNEKGKIIHSDITKGKEEIEFTYLTHVKGRENISEELFSLFKDSYKRDVEKGNTSVGPHRDDFSIKINGIDARSFGSQGQQRTSVLTIKFASIQIIKEISSETPVLLLDDVLSELDESRQEYILNSLEGIQTLITCTGIGDIEKYLKNDFNVFRIDNGRIAEY.

30–37 (GNNAQGKT) serves as a coordination point for ATP.

This sequence belongs to the RecF family.

It localises to the cytoplasm. Its function is as follows. The RecF protein is involved in DNA metabolism; it is required for DNA replication and normal SOS inducibility. RecF binds preferentially to single-stranded, linear DNA. It also seems to bind ATP. This Clostridium acetobutylicum (strain ATCC 824 / DSM 792 / JCM 1419 / IAM 19013 / LMG 5710 / NBRC 13948 / NRRL B-527 / VKM B-1787 / 2291 / W) protein is DNA replication and repair protein RecF.